Reading from the N-terminus, the 558-residue chain is MMQPTILLLKDGTDTSQGKAQIISNINAVQSIVEIVKTTLGPRGMDKLIEGNRGATISNDGATILNLLDIVHPAAKTLVDIAKAQDDEVGDGTTSVCLLAGELLKESKNFIEEGMHPQIVTKGYKEALKLALTFLQENSYSVADKSDGEKREMLLKCAQTSLNSKLLAHYKEFFSEMVVQAVETLDTNLLDKDLIGIKMVTGGSVTDSVLVKGVAFKKTFSYAGFEQQPKKFANPKICLLNIELELKAEKENAEIRIDNPDDYKSIVDAEWELIYEKLRKIVESGAQIVLSKLPIGDLATQYFADRNIFCAGRVDAEDIKRVQKATGSIVQTTVNGLSQDVLGTCGMFEEQQIGAERYNLFQDCPHSKSATIILRGGAEQFIAEAERSLNDAIMIVRRCMKANKIVPGGGAIELEISRLLRLHSRKTEGKVQLVINAFAKALEVIPKTIADNAGHDSIQVLNKLRQKHALESDQSKNFGVDINAVDGIGNNFENFVWEPIIVRKNAFSAATEAACTILSIDETVRNPKSEQPKAPPGGLRRGGPQGMAGLAKNARLGK.

Positions 524 to 558 (VRNPKSEQPKAPPGGLRRGGPQGMAGLAKNARLGK) are disordered.

The protein belongs to the TCP-1 chaperonin family. As to quaternary structure, heterooligomeric complex of about 850 to 900 kDa that forms two stacked rings, 12 to 16 nm in diameter.

Its subcellular location is the cytoplasm. Functionally, molecular chaperone; assists the folding of proteins upon ATP hydrolysis. Known to play a role, in vitro, in the folding of actin and tubulin. The polypeptide is T-complex protein 1 subunit eta (Tetrahymena pyriformis).